Reading from the N-terminus, the 205-residue chain is Urease accessory protein UreG (205 aa).

12–19 (GPVGSGKT) provides a ligand contact to GTP.

The protein belongs to the SIMIBI class G3E GTPase family. UreG subfamily. In terms of assembly, homodimer. UreD, UreF and UreG form a complex that acts as a GTP-hydrolysis-dependent molecular chaperone, activating the urease apoprotein by helping to assemble the nickel containing metallocenter of UreC. The UreE protein probably delivers the nickel.

The protein localises to the cytoplasm. In terms of biological role, facilitates the functional incorporation of the urease nickel metallocenter. This process requires GTP hydrolysis, probably effectuated by UreG. The protein is Urease accessory protein UreG of Pseudomonas savastanoi pv. phaseolicola (strain 1448A / Race 6) (Pseudomonas syringae pv. phaseolicola (strain 1448A / Race 6)).